Here is a 151-residue protein sequence, read N- to C-terminus: Small ribosomal subunit protein bS6 (151 aa).

The disordered stretch occupies residues E97–N151. A compositionally biased stretch (basic and acidic residues) spans Q105–N151.

It belongs to the bacterial ribosomal protein bS6 family.

Functionally, binds together with bS18 to 16S ribosomal RNA. The chain is Small ribosomal subunit protein bS6 from Methylorubrum extorquens (strain CM4 / NCIMB 13688) (Methylobacterium extorquens).